The primary structure comprises 190 residues: Sec-independent protein translocase protein TatB (190 aa).

A helical transmembrane segment spans residues 2–22 (LPDIGGTELLVIAAVALIVVG). Positions 130-190 (IVSKPARKPP…KASTNSDITS (61 aa)) are disordered. The segment covering 134-144 (PARKPPAKKAA) has biased composition (basic residues). Residues 145-163 (AKPAAKAELVSKPKASAKA) show a composition bias toward low complexity.

It belongs to the TatB family. In terms of assembly, the Tat system comprises two distinct complexes: a TatABC complex, containing multiple copies of TatA, TatB and TatC subunits, and a separate TatA complex, containing only TatA subunits. Substrates initially bind to the TatABC complex, which probably triggers association of the separate TatA complex to form the active translocon.

The protein resides in the cell inner membrane. Its function is as follows. Part of the twin-arginine translocation (Tat) system that transports large folded proteins containing a characteristic twin-arginine motif in their signal peptide across membranes. Together with TatC, TatB is part of a receptor directly interacting with Tat signal peptides. TatB may form an oligomeric binding site that transiently accommodates folded Tat precursor proteins before their translocation. This chain is Sec-independent protein translocase protein TatB, found in Caulobacter sp. (strain K31).